The sequence spans 254 residues: Type III pantothenate kinase (254 aa).

Residue 6–13 (DVGNSNIV) coordinates ATP. Residues Tyr-100 and 107–110 (GADR) contribute to the substrate site. Catalysis depends on Asp-109, which acts as the Proton acceptor. Asp-129 is a binding site for K(+). Thr-132 is a binding site for ATP. A substrate-binding site is contributed by Thr-184.

This sequence belongs to the type III pantothenate kinase family. In terms of assembly, homodimer. The cofactor is NH4(+). It depends on K(+) as a cofactor.

Its subcellular location is the cytoplasm. The catalysed reaction is (R)-pantothenate + ATP = (R)-4'-phosphopantothenate + ADP + H(+). It participates in cofactor biosynthesis; coenzyme A biosynthesis; CoA from (R)-pantothenate: step 1/5. Catalyzes the phosphorylation of pantothenate (Pan), the first step in CoA biosynthesis. In Geobacter sp. (strain M21), this protein is Type III pantothenate kinase.